Consider the following 476-residue polypeptide: Aspartyl/glutamyl-tRNA(Asn/Gln) amidotransferase subunit B (476 aa).

This sequence belongs to the GatB/GatE family. GatB subfamily. In terms of assembly, heterotrimer of A, B and C subunits.

The catalysed reaction is L-glutamyl-tRNA(Gln) + L-glutamine + ATP + H2O = L-glutaminyl-tRNA(Gln) + L-glutamate + ADP + phosphate + H(+). It carries out the reaction L-aspartyl-tRNA(Asn) + L-glutamine + ATP + H2O = L-asparaginyl-tRNA(Asn) + L-glutamate + ADP + phosphate + 2 H(+). In terms of biological role, allows the formation of correctly charged Asn-tRNA(Asn) or Gln-tRNA(Gln) through the transamidation of misacylated Asp-tRNA(Asn) or Glu-tRNA(Gln) in organisms which lack either or both of asparaginyl-tRNA or glutaminyl-tRNA synthetases. The reaction takes place in the presence of glutamine and ATP through an activated phospho-Asp-tRNA(Asn) or phospho-Glu-tRNA(Gln). This chain is Aspartyl/glutamyl-tRNA(Asn/Gln) amidotransferase subunit B, found in Lactobacillus helveticus (strain DPC 4571).